The following is a 225-amino-acid chain: Ribose-5-phosphate isomerase A (225 aa).

Substrate-binding positions include 26–29 (TGST), 82–85 (DGAD), and 95–98 (KGGG). Residue Glu104 is the Proton acceptor of the active site. Lys122 contributes to the substrate binding site.

Belongs to the ribose 5-phosphate isomerase family. In terms of assembly, homodimer.

The catalysed reaction is aldehydo-D-ribose 5-phosphate = D-ribulose 5-phosphate. The protein operates within carbohydrate degradation; pentose phosphate pathway; D-ribose 5-phosphate from D-ribulose 5-phosphate (non-oxidative stage): step 1/1. Its function is as follows. Catalyzes the reversible conversion of ribose-5-phosphate to ribulose 5-phosphate. The protein is Ribose-5-phosphate isomerase A of Streptococcus sanguinis (strain SK36).